The sequence spans 95 residues: Aspartyl/glutamyl-tRNA(Asn/Gln) amidotransferase subunit C (95 aa).

The protein belongs to the GatC family. Heterotrimer of A, B and C subunits.

The catalysed reaction is L-glutamyl-tRNA(Gln) + L-glutamine + ATP + H2O = L-glutaminyl-tRNA(Gln) + L-glutamate + ADP + phosphate + H(+). It catalyses the reaction L-aspartyl-tRNA(Asn) + L-glutamine + ATP + H2O = L-asparaginyl-tRNA(Asn) + L-glutamate + ADP + phosphate + 2 H(+). Allows the formation of correctly charged Asn-tRNA(Asn) or Gln-tRNA(Gln) through the transamidation of misacylated Asp-tRNA(Asn) or Glu-tRNA(Gln) in organisms which lack either or both of asparaginyl-tRNA or glutaminyl-tRNA synthetases. The reaction takes place in the presence of glutamine and ATP through an activated phospho-Asp-tRNA(Asn) or phospho-Glu-tRNA(Gln). In Syntrophotalea carbinolica (strain DSM 2380 / NBRC 103641 / GraBd1) (Pelobacter carbinolicus), this protein is Aspartyl/glutamyl-tRNA(Asn/Gln) amidotransferase subunit C.